The primary structure comprises 169 residues: Disulfide bond formation protein B 1 (169 aa).

Topologically, residues 1–14 (MSDNTLYLRREKRF) are cytoplasmic. Residues 15–31 (LVLLGIICLALIGGALY) form a helical membrane-spanning segment. Residues 32 to 49 (MQVVLDEAPCPLCILQRY) are Periplasmic-facing. A disulfide bond links cysteine 41 and cysteine 44. A helical membrane pass occupies residues 50–65 (ALLFIAIFAFIGAAMP). The Cytoplasmic segment spans residues 66–72 (GRRSVTA). Residues 73 to 89 (FETLVTLSALGGIAAAG) traverse the membrane as a helical segment. Residues 90 to 144 (RHVWILAHPSDSCGIDVLQPIVDGLPLATLFPTGFQVSGFCTTPYPPVLGLSLAQ) are Periplasmic-facing. Cysteine 102 and cysteine 130 are oxidised to a cystine. A helical membrane pass occupies residues 145–163 (WALTAFVLTAVLVPACIIR). At 164 to 169 (NRRKPY) the chain is on the cytoplasmic side.

It belongs to the DsbB family.

The protein localises to the cell inner membrane. Required for disulfide bond formation in some periplasmic proteins. Acts by oxidizing the DsbA protein. The polypeptide is Disulfide bond formation protein B 1 (Pseudomonas syringae pv. syringae (strain B728a)).